Here is a 932-residue protein sequence, read N- to C-terminus: Serotype-specific antigen 1 (932 aa).

The N-terminal stretch at 1 to 24 (MYKIKHSFNKTLIAISISSFLSIA) is a signal peptide. One can recognise a Peptidase S8 domain in the interval 25-407 (YATESIENPQ…WGLINLKKAV (383 aa)). Catalysis depends on charge relay system residues Asp-58, His-116, and Ser-351. The region spanning 669–932 (HTPLQTTVWA…PIWLESKCWL (264 aa)) is the Autotransporter domain.

It belongs to the peptidase S8 family.

It is found in the cell outer membrane. The polypeptide is Serotype-specific antigen 1 (ssa1) (Mannheimia haemolytica (Pasteurella haemolytica)).